The chain runs to 856 residues: Leucine--tRNA ligase (856 aa).

The short motif at 42–52 is the 'HIGH' region element; the sequence is PYPSGKLHMGH. The short motif at 615 to 619 is the 'KMSKS' region element; it reads KMSKS. K618 contacts ATP.

The protein belongs to the class-I aminoacyl-tRNA synthetase family.

It is found in the cytoplasm. The enzyme catalyses tRNA(Leu) + L-leucine + ATP = L-leucyl-tRNA(Leu) + AMP + diphosphate. This chain is Leucine--tRNA ligase, found in Chromohalobacter salexigens (strain ATCC BAA-138 / DSM 3043 / CIP 106854 / NCIMB 13768 / 1H11).